Here is a 55-residue protein sequence, read N- to C-terminus: Large ribosomal subunit protein bL33 (55 aa).

It belongs to the bacterial ribosomal protein bL33 family.

This is Large ribosomal subunit protein bL33 from Pectobacterium carotovorum subsp. carotovorum (strain PC1).